We begin with the raw amino-acid sequence, 160 residues long: Phosphopantetheine adenylyltransferase (160 aa).

Thr-10 lines the substrate pocket. Residues 10 to 11 (TF) and His-18 contribute to the ATP site. Substrate is bound by residues Lys-42, Leu-74, and Arg-88. ATP-binding positions include 89-91 (GLR), Glu-99, and 124-130 (NSFISST).

It belongs to the bacterial CoaD family. As to quaternary structure, homohexamer. The cofactor is Mg(2+).

It localises to the cytoplasm. The catalysed reaction is (R)-4'-phosphopantetheine + ATP + H(+) = 3'-dephospho-CoA + diphosphate. It functions in the pathway cofactor biosynthesis; coenzyme A biosynthesis; CoA from (R)-pantothenate: step 4/5. Functionally, reversibly transfers an adenylyl group from ATP to 4'-phosphopantetheine, yielding dephospho-CoA (dPCoA) and pyrophosphate. The sequence is that of Phosphopantetheine adenylyltransferase from Pseudoalteromonas atlantica (strain T6c / ATCC BAA-1087).